Reading from the N-terminus, the 263-residue chain is Small ribosomal subunit protein uS3 (263 aa).

The region spanning Val39–Arg107 is the KH type-2 domain. A disordered region spans residues Gly211–Glu263. The segment covering Thr219 to Arg240 has biased composition (basic and acidic residues).

The protein belongs to the universal ribosomal protein uS3 family. As to quaternary structure, part of the 30S ribosomal subunit. Forms a tight complex with proteins S10 and S14.

Binds the lower part of the 30S subunit head. Binds mRNA in the 70S ribosome, positioning it for translation. This is Small ribosomal subunit protein uS3 from Bordetella pertussis (strain Tohama I / ATCC BAA-589 / NCTC 13251).